The chain runs to 610 residues: MDLAAMKERQQRIRNFSIVAHIDHGKSTLADRILEMTDTISKREMKNQILDDMPLERERGITIKLNAVALTYHAQDGQDYIFHLIDTPGHVDFSYEVSRSLAACEGAILVVDATQGVEAQTLANTYLAIDNDLEILPVINKVDLPSADPEGTKKQIEDEIGLDTDEAVDISAKTGVNVDQVLEKIVQDIPAPTGDLEAPLKALIFDSKYDDYRGVVLSVRVKEGTVKKGDKIEFMNSKAVYEVAEVGINSPKPLARDFLMAGDVGYVTAAIKDIKDARVGDTITDANHPTDKPLAGYRQMQPMVYAGLYPTDNAKFNDLRDALEKLQLNDAALTFEPESSQALGFGFRCGFLGMLHMDVIQERLEREFDLDLITTAPSVTYHVNLHDGSTRNVENPAEMPDVTEIKSIEEPFVKASIMVPNDYVGAVMELCQRKRGQFDTMEYLSDTRVNVIYHIPLSEIIYDFFDRLKSSTRGYASLDYEIDDYRPSDLVKIDILLNGDRVDALSFISHRDFAEERGREIASKLKKIIPRQNFEIPVQAAIGSKIIARTNIKAYRKDVTARIHTGDPDRRAKLLDKQKRGKKRMKAVGKVEVPQAAFMAVLQTDEEIDN.

One can recognise a tr-type G domain in the interval 11-193 (QRIRNFSIVA…KIVQDIPAPT (183 aa)). Residues 23–28 (DHGKST) and 140–143 (NKVD) contribute to the GTP site.

The protein belongs to the TRAFAC class translation factor GTPase superfamily. Classic translation factor GTPase family. LepA subfamily.

It is found in the cell membrane. It catalyses the reaction GTP + H2O = GDP + phosphate + H(+). Its function is as follows. Required for accurate and efficient protein synthesis under certain stress conditions. May act as a fidelity factor of the translation reaction, by catalyzing a one-codon backward translocation of tRNAs on improperly translocated ribosomes. Back-translocation proceeds from a post-translocation (POST) complex to a pre-translocation (PRE) complex, thus giving elongation factor G a second chance to translocate the tRNAs correctly. Binds to ribosomes in a GTP-dependent manner. This chain is Elongation factor 4, found in Limosilactobacillus fermentum (strain NBRC 3956 / LMG 18251) (Lactobacillus fermentum).